Here is a 1100-residue protein sequence, read N- to C-terminus: Regulator of nonsense transcripts 1 (1100 aa).

Positions 42–53 are enriched in low complexity; sequence SQTQTQGQTQSQ. Residues 42–67 form a disordered region; it reads SQTQTQGQTQSQLDNQVNGPDGVLPN. The region spanning 94–251 is the Upf1 CH-rich domain; it reads TKDLPVHACS…NKLEELWKEN (158 aa). 12 residues coordinate Zn(2+): Cys102, Cys105, Cys116, Ser119, Cys124, His134, His138, Cys144, Cys162, Cys165, Cys188, and Cys192. The segment at 102–134 is C3H; sequence CSYCGIHDPACVVYCNTSKKWFCNGRGNTSGSH. A CC/SHH/C region spans residues 116–144; it reads CNTSKKWFCNGRGNTSGSHIVNHLVRAKC. The tract at residues 162-192 is C4; the sequence is CYNCGCRNVFLLGFIPAKADSVVVLLCRQPC. ATP-binding positions include Gln455, 475-479, Gln645, Tyr682, and Glu813; that span reads GTGKT. Residues 978 to 1065 are disordered; that stretch reads LGQVNGPAAG…QPELSQDSYL (88 aa). Low complexity predominate over residues 982–993; sequence NGPAAGRGAPKG. A compositionally biased stretch (polar residues) spans 1012-1063; that stretch reads SGQPNMPNSQASQDLVSQPFSQGPLTQGYITMSQPSQMSQPGLSQPELSQDS.

It belongs to the DNA2/NAM7 helicase family.

It is found in the cytoplasm. It localises to the P-body. The protein localises to the nucleus. The protein resides in the perinuclear region. RNA-dependent helicase and ATPase required for nonsense-mediated decay (NMD) of mRNAs containing premature stop codons. Is recruited to mRNAs upon translation termination and undergoes a cycle of phosphorylation and dephosphorylation; its phosphorylation appears to be a key step in NMD. The formation of an upf1-upf2-upf3 surveillance complex is believed to activate NMD. This chain is Regulator of nonsense transcripts 1, found in Danio rerio (Zebrafish).